The following is a 320-amino-acid chain: uncharacterized protein (320 aa).

In terms of assembly, interacts with VP1054, VP39 and VP80.

The protein resides in the virion. It is found in the host nucleus. It localises to the host cytoplasm. In terms of biological role, plays a role in nucleocapsid assembly and is essential for viral replication. Distributed over the cylindrical capsid sheath of nucleocapsid. This is an uncharacterized protein from Lepidoptera (butterflies and moths).